Reading from the N-terminus, the 302-residue chain is Quinolinate synthase (302 aa).

His-24 and Ser-41 together coordinate iminosuccinate. Position 86 (Cys-86) interacts with [4Fe-4S] cluster. Iminosuccinate contacts are provided by residues 112-114 (YVN) and Ser-129. [4Fe-4S] cluster is bound at residue Cys-171. Residues 197 to 199 (HPE) and Thr-214 each bind iminosuccinate. Residue Cys-259 coordinates [4Fe-4S] cluster.

Belongs to the quinolinate synthase family. Type 2 subfamily. Requires [4Fe-4S] cluster as cofactor.

Its subcellular location is the cytoplasm. It catalyses the reaction iminosuccinate + dihydroxyacetone phosphate = quinolinate + phosphate + 2 H2O + H(+). Its pathway is cofactor biosynthesis; NAD(+) biosynthesis; quinolinate from iminoaspartate: step 1/1. Its function is as follows. Catalyzes the condensation of iminoaspartate with dihydroxyacetone phosphate to form quinolinate. The polypeptide is Quinolinate synthase (Dehalococcoides mccartyi (strain CBDB1)).